The following is a 2768-amino-acid chain: Thyroglobulin (2768 aa).

Residues 1–20 form the signal peptide; sequence MMTLVLWVSTLLSSVCLVAA. Residue Tyr25 is modified to Iodotyrosine; alternate. Residue Tyr25 is modified to Sulfotyrosine; alternate. Residue Tyr25 is modified to Thyroxine; alternate. The residue at position 25 (Tyr25) is a Triiodothyronine; alternate. 4 Thyroglobulin type-1 domains span residues 32 to 93, 94 to 161, 162 to 298, and 299 to 359; these read LRPC…PTAC, LSFC…PTRC, PRSC…RFRC, and PTKC…PLFC. Cystine bridges form between Cys35–Cys53, Cys64–Cys71, Cys73–Cys93, Cys97–Cys121, Cys132–Cys139, Cys141–Cys161, Cys165–Cys184, and Cys195–Cys236. Position 109 is an iodotyrosine (Tyr109). Asn111 is a glycosylation site (N-linked (GlcNAc...) asparagine). Tyr150 carries the post-translational modification Iodotyrosine; alternate. Tyr150 bears the Diiodotyrosine; alternate mark. The N-linked (GlcNAc...) asparagine glycan is linked to Asn199. 2 positions are modified to iodotyrosine: Tyr235 and Tyr259. 8 disulfides stabilise this stretch: Cys302–Cys320, Cys331–Cys337, Cys339–Cys365, Cys408–Cys608, Cys631–Cys636, Cys638–Cys658, Cys662–Cys687, and Cys698–Cys703. Asn484, Asn496, and Asn545 each carry an N-linked (GlcNAc...) asparagine glycan. Thyroglobulin type-1 domains follow at residues 605–658, 659–726, 727–922, 923–1074, 1075–1146, and 1147–1211; these read AQAC…HPRC, PTKC…PKLC, PSVC…IPAC, PGPC…MPQC, PTSC…SAQC, and PGLC…QPAC. Iodotyrosine; alternate is present on Tyr704. Tyr704 carries the post-translational modification Thyroxine; alternate. A Triiodothyronine; alternate modification is found at Tyr704. The residue at position 704 (Tyr704) is a Diiodotyrosine; alternate. 16 disulfides stabilise this stretch: Cys705–Cys726, Cys730–Cys763, Cys774–Cys899, Cys901–Cys922, Cys926–Cys1032, Cys1043–Cys1050, Cys1052–Cys1074, Cys1078–Cys1109, Cys1127–Cys1146, Cys1150–Cys1170, Cys1182–Cys1189, Cys1191–Cys1211, Cys1216–Cys1265, Cys1232–Cys1246, Cys1306–Cys1356, and Cys1331–Cys1347. An N-linked (GlcNAc...) asparagine glycan is attached at Asn748. Residue Tyr785 is modified to Iodotyrosine. N-linked (GlcNAc...) asparagine glycosylation is present at Asn817. Tyr867 carries the iodotyrosine; alternate modification. Diiodotyrosine; alternate is present on Tyr867. Diiodotyrosine is present on Tyr884. Asn948 carries N-linked (GlcNAc...) asparagine glycosylation. Tyr993 is subject to Iodotyrosine; alternate. Tyr993 carries the post-translational modification Diiodotyrosine; alternate. An N-linked (GlcNAc...) asparagine glycan is attached at Asn1017. Residue Asn1141 is glycosylated (N-linked (GlcNAc...) asparagine). Tyr1310 bears the Iodotyrosine mark. Tyr1310 is modified (thyroxine). Residues Asn1349 and Asn1365 are each glycosylated (N-linked (GlcNAc...) asparagine). Intrachain disulfides connect Cys1441-Cys1458, Cys1461-Cys1472, Cys1475-Cys1489, Cys1492-Cys1509, Cys1513-Cys1522, Cys1542-Cys1564, Cys1602-Cys1626, Cys1606-Cys1612, and Cys1638-Cys1661. 3 Type II repeats span residues 1455-1468, 1469-1485, and 1486-1502; these read PLGC…SFSQ, DGKC…GQAG, and SSAC…TITG. The Thyroglobulin type-1 11 domain occupies 1510–1564; sequence VTDCQRDEAGLQCDQNGQYQANQKDMDSGEVFCVDSEGQRLQWLQTEAGLSESQC. A Type IIIA repeat occupies 1602-1722; sequence CLADCADDEA…GTNLTDTHLF (121 aa). Asn1715 is a glycosylation site (N-linked (GlcNAc...) asparagine). 4 disulfide bridges follow: Cys1723/Cys1748, Cys1727/Cys1733, Cys1732/Cys1834, and Cys1759/Cys1776. Residues 1723 to 1891 form a Type IIIB repeat; that stretch reads CLLACDQDSC…LFSAEQANLW (169 aa). Residues Asn1773 and Asn1866 are each glycosylated (N-linked (GlcNAc...) asparagine). Disulfide bonds link Cys1892/Cys1918, Cys1896/Cys1903, Cys1927/Cys1938, Cys1995/Cys2023, Cys1999/Cys2005, Cys2004/Cys2075, and Cys2034/Cys2047. The stretch at 1892 to 1994 is one Type IIIA repeat; that stretch reads CLSRCAQEPV…EKLISNGFFE (103 aa). N-linked (GlcNAc...) asparagine glycosylation occurs at Asn1937. One copy of the Type IIIB repeat lies at 1995–2127; the sequence is CERLCDRDPC…SATRNFSLAQ (133 aa). Residue Asn2012 is glycosylated (N-linked (GlcNAc...) asparagine). Asn2122 carries an N-linked (GlcNAc...) asparagine glycan. A Type IIIA repeat occupies 2128–2185; it reads DFCLQECSRHQDCLVTTLQIQQGVVRCVFYPDIQSCEHSLRSKTCWLLLHEEAAYIYR. 3 disulfide bridges follow: Cys2130–Cys2154, Cys2134–Cys2140, and Cys2163–Cys2172. Residue Tyr2184 is modified to Iodotyrosine. The interval 2188–2768 is cholinesterase-like (ChEL); the sequence is GAPLHQSDGI…LEPVPKSYSK (581 aa). An N-linked (GlcNAc...) asparagine glycan is attached at Asn2251. A disulfide bridge connects residues Cys2265 and Cys2282. N-linked (GlcNAc...) asparagine glycans are attached at residues Asn2296 and Asn2445. Cys2443 and Cys2454 are oxidised to a cystine. Tyr2541 is modified (thyroxine). Residue Tyr2574 is modified to Iodotyrosine; alternate. Residue Tyr2574 is modified to Thyroxine; alternate. At Tyr2574 the chain carries Triiodothyronine; alternate. At Tyr2574 the chain carries Diiodotyrosine; alternate. Asn2583 is a glycosylation site (N-linked (GlcNAc...) asparagine). 2 positions are modified to iodotyrosine: Tyr2588 and Tyr2618. Cys2592 and Cys2716 form a disulfide bridge. Diiodotyrosine is present on Tyr2698. The interval 2731 to 2768 is disordered; it reads GAKDAQLTKSGEEDLEVGPGSEEDFSGSLEPVPKSYSK. The span at 2743–2755 shows a compositional bias: acidic residues; sequence EDLEVGPGSEEDF. The residue at position 2766 (Tyr2766) is an Iodotyrosine; alternate. Position 2766 is a thyroxine; alternate (Tyr2766). At Tyr2766 the chain carries Triiodothyronine; alternate. Diiodotyrosine; alternate is present on Tyr2766.

This sequence belongs to the type-B carboxylesterase/lipase family. As to quaternary structure, monomer. Homodimer (via ChEL region); occurs in the endoplasmic reticulum and is required for export to the Golgi apparatus. Homooligomer; disulfide-linked; stored in this form in the thyroid follicle lumen. In terms of processing, iodinated on tyrosine residues by TPO. There are 4 pairs of iodinated tyrosines used for coupling: acceptor Tyr-25 is coupled to donor Tyr-150 or Tyr-235, acceptor Tyr-2574 is coupled to donor Tyr-2541, acceptor Tyr-2766 in monomer 1 is coupled to donor Tyr-2766 in monomer 2 and acceptor Tyr-1310 in monomer 1 is coupled to donor Tyr-109 in monomer 2. Post-translationally, sulfated tyrosines are desulfated during iodination. Undergoes sequential proteolysis by cathepsins to release thyroxine (T4) and triiodothyronine (T3) hormones. In the thyroid follicle lumen, cross-linked TG (storage form) is solubilized by limited proteolysis mediated by cathepsins CTSB and/or CTSL. Partially cleaved TG is further processed by CTSK/cathepsin K and/or CTSL resulting in the release of thyroxine (T4). Following endocytosis, further processing occurs leading to the release of triiodothyronine (T3) and more T4 hormones. As to expression, specifically expressed in the thyroid gland.

It is found in the secreted. Its function is as follows. Acts as a substrate for the production of iodinated thyroid hormones thyroxine (T4) and triiodothyronine (T3). The synthesis of T3 and T4 involves iodination of selected tyrosine residues of TG/thyroglobulin followed by their oxidative coupling. Following TG re-internalization and lysosomal-mediated proteolysis, T3 and T4 are released from the polypeptide backbone leading to their secretion into the bloodstream. One dimer produces 7 thyroid hormone molecules. The protein is Thyroglobulin (Tg) of Rattus norvegicus (Rat).